A 330-amino-acid polypeptide reads, in one-letter code: Short chain dehydrogenase yanD (330 aa).

Positions 57, 86, 113, 204, and 208 each coordinate NADP(+). Tyr204 acts as the Proton donor in catalysis. Lys208 (lowers pKa of active site Tyr) is an active-site residue.

Belongs to the short-chain dehydrogenases/reductases (SDR) family.

The protein operates within secondary metabolite biosynthesis; terpenoid biosynthesis. In terms of biological role, short chain dehydrogenase; part of the gene cluster that mediates the biosynthesis of yanuthone D, a fungal isoprenoid epoxycyclohexenone that acts as an antibiotic against fungi and bacteria. The first step of the pathway is the synthesis of 6-methylsalicylic acid (6-MSA) by the polyketide synthase yanA. 6-MSA is then converted to m-cresol by the decarboxylase yanB. The cytochrome P450 monooxygenase yanC then catalyzes the oxidation of m-cresol to toluquinol. Epoxidation of toluquinol is then performed by the short chain dehydrogenase yanD, with the help of yanE, and a further prenylation by yanG leads to 7-deacetoxyyanuthone A. The next step is the hydroxylation of C-22 of 7-deacetoxyyanuthone A by the cytochrome P450 monooxygenase yanH to yield 22-deacetylyanuthone A. O-Mevalon transferase yanI then attaches mevalon to the hydroxyl group of 22-deacetylyanuthone A to produce yanuthone E. Finally, the FAD-dependent monooxygenase yanF oxidizes the hydroxyl group at C15 of yanuthone E to form yanuthone D. Furthermore, several branching points in the pathway lead to the production of yanuthones F and G from 7-deacetoxyyanuthone A; yanuthones H and I from 22-deacetylyanuthone A; and yanuthone J from yanuthone E. YanD is also involved in the synthesis of yanuthone X1 which does not have 6-methylsalicylic acid (6-MSA) as precursor. In Aspergillus niger (strain ATCC 1015 / CBS 113.46 / FGSC A1144 / LSHB Ac4 / NCTC 3858a / NRRL 328 / USDA 3528.7), this protein is Short chain dehydrogenase yanD.